Here is a 237-residue protein sequence, read N- to C-terminus: MSSVVYKRVVLKISGEALAGDKEFGIDFNVVNRIADEIKEVRDLGVQIGLVVGGGNIWRGRDAVGMDRTTADHMGMLATVINALALQDALEQRGVPTRVQTAIEMRAIAEPYIRRRAIRHLEKGRVVIFAAGTGNPFFSTDTAASLRAAEIDAEVILLAKKVDGVYDKDPLKHKDAVKFKELSYLDVLNKGLGVMDSTATSLCMDNKIPIIVFDLTTYGNIKKVVMGNDIGTIVKEG.

12 to 15 (KISG) is an ATP binding site. Gly54 contributes to the UMP binding site. Positions 55 and 59 each coordinate ATP. UMP contacts are provided by residues Asp72 and 133-140 (TGNPFFST). Positions 166 and 169 each coordinate ATP.

Belongs to the UMP kinase family. In terms of assembly, homohexamer.

It localises to the cytoplasm. The enzyme catalyses UMP + ATP = UDP + ADP. The protein operates within pyrimidine metabolism; CTP biosynthesis via de novo pathway; UDP from UMP (UMPK route): step 1/1. With respect to regulation, inhibited by UTP. Its function is as follows. Catalyzes the reversible phosphorylation of UMP to UDP. This is Uridylate kinase from Caldanaerobacter subterraneus subsp. tengcongensis (strain DSM 15242 / JCM 11007 / NBRC 100824 / MB4) (Thermoanaerobacter tengcongensis).